The sequence spans 596 residues: Histone deacetylase 9 (596 aa).

2 stretches are compositionally biased toward basic and acidic residues: residues 132-153 and 160-172; these read REKEQKMEQQRKEQEAERHRQE and RSKDRVKERAVAS. Disordered stretches follow at residues 132 to 172, 214 to 258, 293 to 313, and 522 to 596; these read REKE…AVAS, HTSL…VRSR, SSVSSSSPVSGPSSPNNGPVA, and QPEG…QQVT. Residues 172–222 form an interaction with mef2 region; that stretch reads STEVKQKLQEFILSKSATKEPLTNGTSHSMGRHPKLWYTAAHHTSLDQSSP. Pro residues predominate over residues 221–237; the sequence is SPPPSGTSPTYKCPPPG. Low complexity predominate over residues 293-312; it reads SSVSSSSPVSGPSSPNNGPV. The segment covering 522 to 536 has biased composition (basic and acidic residues); it reads QPEGHLEEAEEDLHG. The span at 541–558 shows a compositional bias: polar residues; the sequence is QEKSSSIDNTRSYSSTDL. Basic and acidic residues predominate over residues 567-585; the sequence is KVKEEPPDSENEIKTHLQS. Positions 586–596 are enriched in polar residues; that stretch reads EQKSVFAQQVT.

Belongs to the histone deacetylase family. HD type 2 subfamily. Homodimer. Interacts with mef2. In terms of tissue distribution, broadly expressed.

Its subcellular location is the nucleus. The enzyme catalyses N(6)-acetyl-L-lysyl-[histone] + H2O = L-lysyl-[histone] + acetate. In terms of biological role, devoided of intrinsic deacetylase activity, promotes the deacetylation of lysine residues on the N-terminal part of the core histones (H2A, H2B, H3 and H4) by recruiting other histone deacetylases. Histone deacetylation gives a tag for epigenetic repression and plays an important role in transcriptional regulation, cell cycle progression and developmental events. Represses MEF2-dependent transcription. This is Histone deacetylase 9 (hdac9) from Xenopus laevis (African clawed frog).